The primary structure comprises 413 residues: Arginine biosynthesis bifunctional protein ArgJ (413 aa).

Positions 158, 184, 195, 285, 408, and 413 each coordinate substrate. T195 functions as the Nucleophile in the catalytic mechanism.

This sequence belongs to the ArgJ family. Heterotetramer of two alpha and two beta chains.

It localises to the cytoplasm. The enzyme catalyses N(2)-acetyl-L-ornithine + L-glutamate = N-acetyl-L-glutamate + L-ornithine. The catalysed reaction is L-glutamate + acetyl-CoA = N-acetyl-L-glutamate + CoA + H(+). It participates in amino-acid biosynthesis; L-arginine biosynthesis; L-ornithine and N-acetyl-L-glutamate from L-glutamate and N(2)-acetyl-L-ornithine (cyclic): step 1/1. It functions in the pathway amino-acid biosynthesis; L-arginine biosynthesis; N(2)-acetyl-L-ornithine from L-glutamate: step 1/4. Its function is as follows. Catalyzes two activities which are involved in the cyclic version of arginine biosynthesis: the synthesis of N-acetylglutamate from glutamate and acetyl-CoA as the acetyl donor, and of ornithine by transacetylation between N(2)-acetylornithine and glutamate. This is Arginine biosynthesis bifunctional protein ArgJ from Mesorhizobium japonicum (strain LMG 29417 / CECT 9101 / MAFF 303099) (Mesorhizobium loti (strain MAFF 303099)).